A 219-amino-acid chain; its full sequence is Interleukin-12 subunit alpha (219 aa).

The N-terminal stretch at Met-1–Ala-22 is a signal peptide. 3 N-linked (GlcNAc...) asparagine glycosylation sites follow: Asn-24, Asn-93, and Asn-107. 3 cysteine pairs are disulfide-bonded: Cys-37–Cys-110, Cys-64–Cys-196, and Cys-85–Cys-123.

Belongs to the IL-6 superfamily. In terms of assembly, heterodimer with IL12B; disulfide-linked. This heterodimer is known as interleukin IL-12. Heterodimer with EBI3/IL27B; not disulfide-linked. This heterodimer is known as interleukin IL-35. Interacts with NBR1; this interaction promotes IL-12 secretion.

The protein resides in the secreted. Functionally, heterodimerizes with IL12B to form the IL-12 cytokine or with EBI3/IL27B to form the IL-35 cytokine. IL-12 is primarily produced by professional antigen-presenting cells (APCs) such as B-cells and dendritic cells (DCs) as well as macrophages and granulocytes and regulates T-cell and natural killer-cell responses, induces the production of interferon-gamma (IFN-gamma), favors the differentiation of T-helper 1 (Th1) cells and is an important link between innate resistance and adaptive immunity. Mechanistically, exerts its biological effects through a receptor composed of IL12R1 and IL12R2 subunits. Binding to the receptor results in the rapid tyrosine phosphorylation of a number of cellular substrates including the JAK family kinases TYK2 and JAK2. In turn, recruited STAT4 gets phosphorylated and translocates to the nucleus where it regulates cytokine/growth factor responsive genes. As part of IL-35, plays essential roles in maintaining the immune homeostasis of the liver microenvironment and also functions as an immune-suppressive cytokine. Mediates biological events through unconventional receptors composed of IL12RB2 and gp130/IL6ST heterodimers or homodimers. Signaling requires the transcription factors STAT1 and STAT4, which form a unique heterodimer that binds to distinct DNA sites. This is Interleukin-12 subunit alpha (IL12A) from Macaca mulatta (Rhesus macaque).